Reading from the N-terminus, the 181-residue chain is Extracellular superoxide dismutase [Cu-Zn] (181 aa).

An N-terminal signal peptide occupies residues 1-18; sequence MMQYLVVSLALCATICSA. A glycan (N-linked (GlcNAc...) asparagine) is linked at Asn-46. Cu cation is bound by residues His-75, His-77, and His-92. Residues Cys-86 and Cys-175 are joined by a disulfide bond. Zn(2+)-binding residues include His-92, His-100, His-109, and Asp-112. Asn-119 is a glycosylation site (N-linked (GlcNAc...) asparagine). His-149 serves as a coordination point for Cu cation. Asn-159 carries an N-linked (GlcNAc...) asparagine glycan.

The protein belongs to the Cu-Zn superoxide dismutase family. Cu cation serves as cofactor. Requires Zn(2+) as cofactor. In terms of tissue distribution, expressed at higher levels in females compared to males.

Its subcellular location is the secreted. The enzyme catalyses 2 superoxide + 2 H(+) = H2O2 + O2. Protects the extracellular space from the toxic effects of reactive oxygen intermediates by converting superoxide radicals into hydrogen peroxide and oxygen. This is Extracellular superoxide dismutase [Cu-Zn] from Drosophila melanogaster (Fruit fly).